A 128-amino-acid chain; its full sequence is Large ribosomal subunit protein bL12 (128 aa).

It belongs to the bacterial ribosomal protein bL12 family. Homodimer. Part of the ribosomal stalk of the 50S ribosomal subunit. Forms a multimeric L10(L12)X complex, where L10 forms an elongated spine to which 2 to 4 L12 dimers bind in a sequential fashion. Binds GTP-bound translation factors.

Functionally, forms part of the ribosomal stalk which helps the ribosome interact with GTP-bound translation factors. Is thus essential for accurate translation. This is Large ribosomal subunit protein bL12 from Brachyspira hyodysenteriae (strain ATCC 49526 / WA1).